The primary structure comprises 490 residues: Vacuolar amino acid transporter 7 (490 aa).

At 1–6 the chain is on the cytoplasmic side; it reads MEATSS. Residues 7 to 27 traverse the membrane as a helical segment; that stretch reads ALSSTANLVKTIVGAGTLAIP. The Vacuolar portion of the chain corresponds to 28 to 34; it reads YSFKSDG. The helical transmembrane segment at 35–55 threads the bilayer; sequence VLVGVILTLLAAVTSGLGLFV. The Cytoplasmic portion of the chain corresponds to 56–84; the sequence is LSKCSKTLINPRNSSFFTLCMLTYPTLAP. Residues 85–105 form a helical membrane-spanning segment; that stretch reads IFDLAMIVQCFGVGLSYLVLI. Residues 106-108 lie on the Vacuolar side of the membrane; that stretch reads GDL. Residues 109–129 form a helical membrane-spanning segment; that stretch reads FPGLFGGERNYWIIASAVIII. Residues 130–143 are Cytoplasmic-facing; the sequence is PLCLVKKLDQLKYS. A helical transmembrane segment spans residues 144–164; sequence SILGLFALAYISILVFSHFVF. The Vacuolar portion of the chain corresponds to 165–190; it reads ELGKGELTNILRNDICWWKIHDFKGL. The chain crosses the membrane as a helical span at residues 191–211; the sequence is LSTFSIIIFAFTGSMNLFPMI. At 212-221 the chain is on the cytoplasmic side; the sequence is NELKDNSMEN. The chain crosses the membrane as a helical span at residues 222–242; that stretch reads ITFVINNSISLSTALFLIVGL. Residues 243–264 are Vacuolar-facing; sequence SGYLTFGNETLGNLMLNYDPNS. Residues 265–285 form a helical membrane-spanning segment; it reads IWIVIGKFCLGSMLILSFPLL. Over 286 to 397 the chain is Cytoplasmic; the sequence is FHPLRIAVNN…FVKSRFYWIT (112 aa). The segment at 355–374 is disordered; sequence NGNFDNGSIESQENNNDERG. Residues 357–368 show a composition bias toward polar residues; it reads NFDNGSIESQEN. A helical transmembrane segment spans residues 398-418; sequence ALLLISMYTLALSVQSFALVL. Residues 419–428 are Vacuolar-facing; the sequence is SFVGATGSTS. Residues 429-449 traverse the membrane as a helical segment; that stretch reads ISFTLPGLLGYKLIGLDSLAI. The Cytoplasmic portion of the chain corresponds to 450–463; sequence GKMIPPKDRFYKRC. A helical transmembrane segment spans residues 464–484; sequence SLLLVFYGLSVMFLSLYVTVF. Residues 485–490 lie on the Vacuolar side of the membrane; sequence NRSDEA.

It belongs to the amino acid/polyamine transporter 2 family.

It is found in the vacuole membrane. Its function is as follows. Probable amino acid transporter of unknown specificity. This chain is Vacuolar amino acid transporter 7 (AVT7), found in Saccharomyces cerevisiae (strain ATCC 204508 / S288c) (Baker's yeast).